The chain runs to 216 residues: Phosphoenolpyruvate guanylyltransferase (216 aa).

Phosphoenolpyruvate contacts are provided by Thr-150, Gly-165, and Ser-168.

It belongs to the CofC family.

The catalysed reaction is phosphoenolpyruvate + GTP + H(+) = enolpyruvoyl-2-diphospho-5'-guanosine + diphosphate. The protein operates within cofactor biosynthesis; coenzyme F420 biosynthesis. In terms of biological role, guanylyltransferase that catalyzes the activation of phosphoenolpyruvate (PEP) as enolpyruvoyl-2-diphospho-5'-guanosine, via the condensation of PEP with GTP. It is involved in the biosynthesis of coenzyme F420, a hydride carrier cofactor. The protein is Phosphoenolpyruvate guanylyltransferase of Mycobacterium leprae (strain Br4923).